The following is a 371-amino-acid chain: Partitioning defective 6 homolog beta (371 aa).

Phosphoserine is present on residues Ser10 and Ser11. Residues 16–96 (TMEVKSKFGA…PLLRIFIQKK (81 aa)) enclose the PB1 domain. Residues 126-253 (RKKPHIVISM…ITVRPANQRN (128 aa)) form an interaction with PARD3 and CDC42 region. The 18-residue stretch at 133–150 (ISMPQDFRPVSSIIDVDI) folds into the Pseudo-CRIB domain. Positions 157–250 (RVRLYKYGTE…NLIITVRPAN (94 aa)) constitute a PDZ domain. Disordered regions lie at residues 253-273 (NNVV…DNSL) and 326-371 (FESG…IITL). Polar residues predominate over residues 326–340 (FESGQNGFSPPQDTS). Basic and acidic residues predominate over residues 352–363 (LESRAPDQKLLE).

It belongs to the PAR6 family. As to quaternary structure, interacts with PARD3. Interacts with GTP-bound forms of CDC42, RHOQ/TC10 and RAC1. Interacts with the N-terminal part of PRKCI and PRKCZ. Part of a complex with PARD3, CDC42 or RAC1 and PRKCI or PRKCZ. Part of a complex with LLGL1 and PRKCI. Interacts with ALS2CR19. Interacts with ECT2. Interacts with PALS1. In terms of tissue distribution, expressed in pancreas and in both adult and fetal kidney. Weakly expressed in placenta and lung. Not expressed in other tissues.

It is found in the cytoplasm. It localises to the cell membrane. The protein resides in the cell junction. The protein localises to the tight junction. Adapter protein involved in asymmetrical cell division and cell polarization processes. Probably involved in formation of epithelial tight junctions. Association with PARD3 may prevent the interaction of PARD3 with F11R/JAM1, thereby preventing tight junction assembly. The PARD6-PARD3 complex links GTP-bound Rho small GTPases to atypical protein kinase C proteins. This chain is Partitioning defective 6 homolog beta (Pard6b), found in Mus musculus (Mouse).